The primary structure comprises 375 residues: Nucleosome assembly protein 1-like 4 (375 aa).

A disordered region spans residues 1–31 (MADHSFSDGVPSDSVEAAKNASNTEKLTDQV). Ala2 bears the N-acetylalanine mark. Phosphoserine occurs at positions 5, 7, and 12. The span at 20-31 (NASNTEKLTDQV) shows a compositional bias: polar residues. A Phosphothreonine modification is found at Thr51. Residues Ser53 and Ser54 each carry the phosphoserine modification. Position 58 is a phosphothreonine (Thr58). Lys105 bears the N6-acetyllysine mark. A disordered region spans residues 116–137 (PTDAESEWHSENEEEEKLAGDM). Over residues 121 to 137 (SEWHSENEEEEKLAGDM) the composition is skewed to basic and acidic residues. Phosphoserine is present on Ser125. Lys146 is subject to N6-acetyllysine. A Nuclear localization signal motif is present at residues 265 to 271 (IKKKQKH). Phosphoserine is present on Ser304. The tract at residues 339–375 (AIEDDDNFEEGEEGEEEELEGDEEGEDEDDAEINPKV) is disordered.

The protein belongs to the nucleosome assembly protein (NAP) family. In terms of assembly, interacts with core (H2A, CD2APH2B, H3, H4) and linker (H1) histones. As to quaternary structure, (Microbial infection) Interacts with Chikungunya virus non-structural protein 3 (via C-terminus). In terms of processing, phosphorylated at the G0/G1 boundary but it is not phosphorylated in S-phase. Phosphorylated protein remains in the cytoplasm in a complex with histones during the G0/G1 transition, whereas dephosphorylation triggers its transport into the nucleus at the G1/S-boundary. Polyglutamylated by TTLL4, a modification that occurs exclusively on glutamate residues and results in polyglutamate chains on the gamma-carboxyl group. Some residues may also be monoglycylated but not polyglycylated due to the absence of functional TTLL10 in human. In terms of tissue distribution, ubiquitous. Biallelically expressed in fetal and adult tissues. Highest levels in testis.

It localises to the nucleus. Its subcellular location is the cytoplasm. In terms of biological role, acts as a histone chaperone in nucleosome assembly. The polypeptide is Nucleosome assembly protein 1-like 4 (Homo sapiens (Human)).